A 339-amino-acid polypeptide reads, in one-letter code: UDP-glucose 4-epimerase (339 aa).

NAD(+)-binding positions include 10 to 12, 31 to 35, 58 to 59, phenylalanine 80, and lysine 84; these read GYI, DNLSN, and DL. Residue 124–126 coordinates substrate; the sequence is SAT. Residue tyrosine 148 is the Proton acceptor of the active site. Residues lysine 152 and tyrosine 176 each contribute to the NAD(+) site. Residues 176-178, 197-199, arginine 230, and 291-294 each bind substrate; these read YFN, NNL, and RPGD.

This sequence belongs to the NAD(P)-dependent epimerase/dehydratase family. Requires NAD(+) as cofactor.

The catalysed reaction is UDP-alpha-D-glucose = UDP-alpha-D-galactose. It catalyses the reaction UDP-N-acetyl-alpha-D-glucosamine = UDP-N-acetyl-alpha-D-galactosamine. It functions in the pathway cell wall biogenesis; teichoic acid biosynthesis. In terms of biological role, catalyzes two distinct but analogous reactions: the reversible epimerization of UDP-glucose to UDP-galactose and the reversible epimerization of UDP-N-acetylglucosamine to UDP-N-acetylgalactosamine. The enzyme is more efficient in catalyzing the interconversion between unacetylated than between corresponding N-acetylated substrates. Essential for growth in media containing either glucose or galactose. May protect the cell from the toxic effects of galactose and glucose or derivatives of both sugars. Involved in the biosynthesis of teichoic acids via the formation of UDP-N-acetylgalactosamine. Influences cell division. The chain is UDP-glucose 4-epimerase from Bacillus subtilis (strain 168).